We begin with the raw amino-acid sequence, 273 residues long: 3-methyl-2-oxobutanoate hydroxymethyltransferase (273 aa).

The Mg(2+) site is built by Asp-53 and Asp-92. Residues 53–54, Asp-92, and Lys-122 each bind 3-methyl-2-oxobutanoate; that span reads DS. Glu-124 is a Mg(2+) binding site. Residue Glu-191 is the Proton acceptor of the active site.

It belongs to the PanB family. In terms of assembly, homodecamer; pentamer of dimers. It depends on Mg(2+) as a cofactor.

The protein resides in the cytoplasm. The enzyme catalyses 3-methyl-2-oxobutanoate + (6R)-5,10-methylene-5,6,7,8-tetrahydrofolate + H2O = 2-dehydropantoate + (6S)-5,6,7,8-tetrahydrofolate. Its pathway is cofactor biosynthesis; (R)-pantothenate biosynthesis; (R)-pantoate from 3-methyl-2-oxobutanoate: step 1/2. Functionally, catalyzes the reversible reaction in which hydroxymethyl group from 5,10-methylenetetrahydrofolate is transferred onto alpha-ketoisovalerate to form ketopantoate. In Bacteroides fragilis (strain ATCC 25285 / DSM 2151 / CCUG 4856 / JCM 11019 / LMG 10263 / NCTC 9343 / Onslow / VPI 2553 / EN-2), this protein is 3-methyl-2-oxobutanoate hydroxymethyltransferase.